A 408-amino-acid polypeptide reads, in one-letter code: E3 ubiquitin-protein ligase At1g12760 (408 aa).

Residues 1 to 52 are disordered; it reads MSTETTTGNSSLIPASSSSSSSDAIDPAPLLFNGDDNEGNNGGGGGERRSVR. Residues 10-34 show a composition bias toward low complexity; the sequence is SSLIPASSSSSSSDAIDPAPLLFNG. A run of 2 helical transmembrane segments spans residues 100-120 and 133-153; these read VVVLDIVWNLAFVSVATAILV and VWLLGYALQCVLHMVCVCVEY. The segment at 160–195 is disordered; that stretch reads RTNRTTTTTPPRSRSSSSSSSSSSLEEEALGSRRNS. A compositionally biased stretch (low complexity) spans 163 to 183; sequence RTTTTTPPRSRSSSSSSSSSS. Transmembrane regions (helical) follow at residues 219-239, 254-274, and 275-295; these read ANTMFSFIWWIIGFYWVSAGG, IVFLGFDVFFVVFCVALACVI, and GIAVCCCLPCIIAVLYAVADQ. The segment at 353–394 adopts an RING-type; atypical zinc-finger fold; it reads CCICLSAYEDGTELRELPCGHHFHCSCVDKWLYINATCPLCK.

The protein localises to the membrane. The catalysed reaction is S-ubiquitinyl-[E2 ubiquitin-conjugating enzyme]-L-cysteine + [acceptor protein]-L-lysine = [E2 ubiquitin-conjugating enzyme]-L-cysteine + N(6)-ubiquitinyl-[acceptor protein]-L-lysine.. Its pathway is protein modification; protein ubiquitination. Mediates E2-dependent protein ubiquitination in vitro. The sequence is that of E3 ubiquitin-protein ligase At1g12760 from Arabidopsis thaliana (Mouse-ear cress).